A 189-amino-acid polypeptide reads, in one-letter code: Peptidyl-tRNA hydrolase (189 aa).

Residue Tyr15 coordinates tRNA. His20 (proton acceptor) is an active-site residue. TRNA contacts are provided by Phe66, Asn68, and Asn114.

This sequence belongs to the PTH family. In terms of assembly, monomer.

It is found in the cytoplasm. It carries out the reaction an N-acyl-L-alpha-aminoacyl-tRNA + H2O = an N-acyl-L-amino acid + a tRNA + H(+). Its function is as follows. Hydrolyzes ribosome-free peptidyl-tRNAs (with 1 or more amino acids incorporated), which drop off the ribosome during protein synthesis, or as a result of ribosome stalling. Functionally, catalyzes the release of premature peptidyl moieties from peptidyl-tRNA molecules trapped in stalled 50S ribosomal subunits, and thus maintains levels of free tRNAs and 50S ribosomes. The protein is Peptidyl-tRNA hydrolase of Streptococcus equi subsp. zooepidemicus (strain MGCS10565).